Consider the following 348-residue polypeptide: CCN family member 2 (348 aa).

The signal sequence occupies residues M1 to G25. Positions Q26 to K97 constitute an IGFBP N-terminal domain. 6 disulfides stabilise this stretch: C28/C53, C32/C55, C34/C56, C42/C59, C67/C81, and C73/C94. The 67-residue stretch at A100–D166 folds into the VWFC domain. The TSP type-1 domain occupies N197–E242. Residues E246–A348 form a heparin-binding region. 5 disulfides stabilise this stretch: C255/C292, C272/C306, C283/C322, C286/C324, and C291/C328. Residues C255–P329 enclose the CTCK domain.

This sequence belongs to the CCN family. Monomer. Interacts with TSKU. Testis, spleen, kidney, lung, heart, and brain (lowest level in testis and highest in lung).

It localises to the secreted. The protein localises to the extracellular space. It is found in the extracellular matrix. In terms of biological role, major connective tissue mitoattractant secreted by vascular endothelial cells. Promotes proliferation and differentiation of chondrocytes. Is involved in the stimulation of osteoblast differentiation and has a critical role in osteogenesis. Mediates heparin- and divalent cation-dependent cell adhesion in many cell types including fibroblasts, myofibroblasts, endothelial and epithelial cells. Enhances fibroblast growth factor-induced DNA synthesis. This is CCN family member 2 from Mus musculus (Mouse).